The following is a 313-amino-acid chain: Pyrimidine-specific ribonucleoside hydrolase RihB (313 aa).

The active-site Proton acceptor is aspartate 11. Residues aspartate 11, aspartate 16, and valine 124 each contribute to the Ca(2+) site. Substrate is bound by residues glutamine 227 and histidine 239. Residue aspartate 240 participates in Ca(2+) binding.

It belongs to the IUNH family. RihB subfamily. In terms of assembly, homotetramer. It depends on Ca(2+) as a cofactor.

It catalyses the reaction a pyrimidine ribonucleoside + H2O = a pyrimidine nucleobase + D-ribose. Its function is as follows. Hydrolyzes cytidine or uridine to ribose and cytosine or uracil, respectively. Has a clear preference for cytidine over uridine. Strictly specific for ribonucleosides. This Escherichia coli (strain SMS-3-5 / SECEC) protein is Pyrimidine-specific ribonucleoside hydrolase RihB.